The following is an 85-amino-acid chain: Large ribosomal subunit protein bL27 (85 aa).

The tract at residues 1–22 (MAHKKAGGSTKNGRDSESKRLG) is disordered.

Belongs to the bacterial ribosomal protein bL27 family.

The protein is Large ribosomal subunit protein bL27 of Idiomarina loihiensis (strain ATCC BAA-735 / DSM 15497 / L2-TR).